Consider the following 363-residue polypeptide: Phosphoribosylformylglycinamidine cyclo-ligase (363 aa).

This sequence belongs to the AIR synthase family.

It is found in the cytoplasm. The catalysed reaction is 2-formamido-N(1)-(5-O-phospho-beta-D-ribosyl)acetamidine + ATP = 5-amino-1-(5-phospho-beta-D-ribosyl)imidazole + ADP + phosphate + H(+). It participates in purine metabolism; IMP biosynthesis via de novo pathway; 5-amino-1-(5-phospho-D-ribosyl)imidazole from N(2)-formyl-N(1)-(5-phospho-D-ribosyl)glycinamide: step 2/2. The sequence is that of Phosphoribosylformylglycinamidine cyclo-ligase from Brucella anthropi (strain ATCC 49188 / DSM 6882 / CCUG 24695 / JCM 21032 / LMG 3331 / NBRC 15819 / NCTC 12168 / Alc 37) (Ochrobactrum anthropi).